We begin with the raw amino-acid sequence, 172 residues long: Adenylate kinase isoenzyme 6 (172 aa).

5 residues coordinate ATP: Gly13, Gly15, Lys16, Thr17, and Thr18. The interval 33–56 is NMPbind; sequence NVGDLAREGELYDGFDEEYNCPIL. Positions 108–118 are LID; sequence TRGYSEKKLND. ATP is bound by residues Arg109 and Lys148.

It belongs to the adenylate kinase family. AK6 subfamily. Monomer and homodimer. Interacts with small ribosomal subunit protein uS11. Not a structural component of 43S pre-ribosomes, but transiently interacts with them by binding to uS11. Interacts with COIL (via C-terminus).

It is found in the cytoplasm. Its subcellular location is the nucleus. It localises to the nucleoplasm. The protein resides in the cajal body. It carries out the reaction AMP + ATP = 2 ADP. The catalysed reaction is ATP + H2O = ADP + phosphate + H(+). Broad-specificity nucleoside monophosphate (NMP) kinase that catalyzes the reversible transfer of the terminal phosphate group between nucleoside triphosphates and monophosphates. Also has ATPase activity. Involved in the late cytoplasmic maturation steps of the 40S ribosomal particles, specifically 18S rRNA maturation. While NMP activity is not required for ribosome maturation, ATPase activity is. Associates transiently with small ribosomal subunit protein uS11. ATP hydrolysis breaks the interaction with uS11. May temporarily remove uS11 from the ribosome to enable a conformational change of the ribosomal RNA that is needed for the final maturation step of the small ribosomal subunit. Its NMP activity may have a role in nuclear energy homeostasis. May be involved in regulation of Cajal body (CB) formation. In Oryctolagus cuniculus (Rabbit), this protein is Adenylate kinase isoenzyme 6.